The following is a 117-amino-acid chain: Large ribosomal subunit protein bL20 (117 aa).

The protein belongs to the bacterial ribosomal protein bL20 family.

Binds directly to 23S ribosomal RNA and is necessary for the in vitro assembly process of the 50S ribosomal subunit. It is not involved in the protein synthesizing functions of that subunit. The sequence is that of Large ribosomal subunit protein bL20 from Campylobacter hominis (strain ATCC BAA-381 / DSM 21671 / CCUG 45161 / LMG 19568 / NCTC 13146 / CH001A).